The following is a 142-amino-acid chain: Dromaiocalcin-2 (142 aa).

3 cysteine pairs are disulfide-bonded: cysteine 6/cysteine 17, cysteine 34/cysteine 138, and cysteine 113/cysteine 130. Residues 13–139 form the C-type lectin domain; that stretch reads FDGRCYGFFP…CSDRKPFICA (127 aa). Residues serine 62 and serine 68 each carry the phosphoserine modification.

Post-translationally, a minor form with some unmodified Ser-68 and partial phosphorylation of Ser-66 may also occur.

Its subcellular location is the secreted. The protein localises to the extracellular space. The protein resides in the extracellular matrix. The chain is Dromaiocalcin-2 from Dromaius novaehollandiae (Emu).